The following is a 345-amino-acid chain: Phosphoribosylformylglycinamidine cyclo-ligase (345 aa).

Belongs to the AIR synthase family.

It localises to the cytoplasm. The enzyme catalyses 2-formamido-N(1)-(5-O-phospho-beta-D-ribosyl)acetamidine + ATP = 5-amino-1-(5-phospho-beta-D-ribosyl)imidazole + ADP + phosphate + H(+). It participates in purine metabolism; IMP biosynthesis via de novo pathway; 5-amino-1-(5-phospho-D-ribosyl)imidazole from N(2)-formyl-N(1)-(5-phospho-D-ribosyl)glycinamide: step 2/2. This is Phosphoribosylformylglycinamidine cyclo-ligase from Salmonella typhimurium (strain LT2 / SGSC1412 / ATCC 700720).